The chain runs to 183 residues: Dual-action ribosomal maturation protein DarP (183 aa).

Positions 1–27 (MSSHSQEPVGEENFDDSEYDRPNKSQV) are disordered. A compositionally biased stretch (acidic residues) spans 9 to 18 (VGEENFDDSE).

Belongs to the DarP family.

Its subcellular location is the cytoplasm. Its function is as follows. Member of a network of 50S ribosomal subunit biogenesis factors which assembles along the 30S-50S interface, preventing incorrect 23S rRNA structures from forming. Promotes peptidyl transferase center (PTC) maturation. The protein is Dual-action ribosomal maturation protein DarP of Bordetella pertussis (strain Tohama I / ATCC BAA-589 / NCTC 13251).